The chain runs to 475 residues: Cytochrome P450 monooxygenase opdE (475 aa).

A helical membrane pass occupies residues 10-32 (VQNIPVLLLSCGFLAILFRSLVL). Position 457 (C457) interacts with heme.

It belongs to the cytochrome P450 family. The cofactor is heme.

It localises to the membrane. Its pathway is secondary metabolite biosynthesis. Cytochrome P450 monooxygenase; part of the gene cluster that mediates the biosynthesis of oxopyrrolidines, polyketide-amino acid hybrid compounds with feature structures of tetramic acid. Does not seem to play a role in oxopyrrolidines A and B biosynthesis. May be involved in further modifications of these oxopyrrolidines. The chain is Cytochrome P450 monooxygenase opdE from Penicillium oxalicum (strain 114-2 / CGMCC 5302) (Penicillium decumbens).